The following is a 432-amino-acid chain: 3-isopropylmalate dehydratase large subunit (432 aa).

Residues Cys299, Cys364, and Cys367 each coordinate [4Fe-4S] cluster.

This sequence belongs to the aconitase/IPM isomerase family. LeuC type 2 subfamily. As to quaternary structure, heterodimer of LeuC and LeuD. Requires [4Fe-4S] cluster as cofactor.

The enzyme catalyses (2R,3S)-3-isopropylmalate = (2S)-2-isopropylmalate. Its pathway is amino-acid biosynthesis; L-leucine biosynthesis; L-leucine from 3-methyl-2-oxobutanoate: step 2/4. Its function is as follows. Catalyzes the isomerization between 2-isopropylmalate and 3-isopropylmalate, via the formation of 2-isopropylmaleate. The protein is 3-isopropylmalate dehydratase large subunit of Aquifex aeolicus (strain VF5).